Reading from the N-terminus, the 229-residue chain is Large ribosomal subunit protein uL1 (229 aa).

Belongs to the universal ribosomal protein uL1 family. Part of the 50S ribosomal subunit.

Its function is as follows. Binds directly to 23S rRNA. The L1 stalk is quite mobile in the ribosome, and is involved in E site tRNA release. Functionally, protein L1 is also a translational repressor protein, it controls the translation of the L11 operon by binding to its mRNA. The polypeptide is Large ribosomal subunit protein uL1 (Lactococcus lactis subsp. cremoris (strain MG1363)).